We begin with the raw amino-acid sequence, 147 residues long: Phosphoribosyl-AMP cyclohydrolase (147 aa).

Residue Asp-91 participates in Mg(2+) binding. Position 92 (Cys-92) interacts with Zn(2+). Residues Asp-93 and Asp-95 each coordinate Mg(2+). The Zn(2+) site is built by Cys-109 and Cys-116.

Belongs to the PRA-CH family. As to quaternary structure, homodimer. Mg(2+) is required as a cofactor. Requires Zn(2+) as cofactor.

It is found in the cytoplasm. The catalysed reaction is 1-(5-phospho-beta-D-ribosyl)-5'-AMP + H2O = 1-(5-phospho-beta-D-ribosyl)-5-[(5-phospho-beta-D-ribosylamino)methylideneamino]imidazole-4-carboxamide. The protein operates within amino-acid biosynthesis; L-histidine biosynthesis; L-histidine from 5-phospho-alpha-D-ribose 1-diphosphate: step 3/9. In terms of biological role, catalyzes the hydrolysis of the adenine ring of phosphoribosyl-AMP. This Rhodopseudomonas palustris (strain BisA53) protein is Phosphoribosyl-AMP cyclohydrolase.